We begin with the raw amino-acid sequence, 278 residues long: MMTLSYIDPIAFELGPISVRWYGIIIAMGILLGYFIAQASVKRIGFHQDTLVDIIFWSAIFGFIIARIYFVIFQWPYYVQHPIEIPMIWQGGIAIHGGLIGGFVTGIIICKQKNINPFQIGDVIAPSMILGQGIGRWGNFMNHEAHGGTVSKSFLENLHIPDFIINNMYIDGKYYQPTFLYESIWDVLGFVILILLRKHLRIGDTFCLYLIWYSIGRFFVEGMRTDSLMLAGDIRIAQLMSIILIIIGVVIMIVRRVKYDAPRYKAVGPLSWPSKEVK.

3 consecutive transmembrane segments (helical) span residues 21-41 (WYGIIIAMGILLGYFIAQASV), 54-74 (IIFWSAIFGFIIARIYFVIFQ), and 88-108 (IWQGGIAIHGGLIGGFVTGII). Arg-136 is a binding site for a 1,2-diacyl-sn-glycero-3-phospho-(1'-sn-glycerol). Transmembrane regions (helical) follow at residues 176–196 (QPTFLYESIWDVLGFVILILL), 202–222 (IGDTFCLYLIWYSIGRFFVEG), and 234–254 (IRIAQLMSIILIIIGVVIMIV).

The protein belongs to the Lgt family.

Its subcellular location is the cell membrane. The catalysed reaction is L-cysteinyl-[prolipoprotein] + a 1,2-diacyl-sn-glycero-3-phospho-(1'-sn-glycerol) = an S-1,2-diacyl-sn-glyceryl-L-cysteinyl-[prolipoprotein] + sn-glycerol 1-phosphate + H(+). Its pathway is protein modification; lipoprotein biosynthesis (diacylglyceryl transfer). Catalyzes the transfer of the diacylglyceryl group from phosphatidylglycerol to the sulfhydryl group of the N-terminal cysteine of a prolipoprotein, the first step in the formation of mature lipoproteins. The sequence is that of Phosphatidylglycerol--prolipoprotein diacylglyceryl transferase from Staphylococcus saprophyticus subsp. saprophyticus (strain ATCC 15305 / DSM 20229 / NCIMB 8711 / NCTC 7292 / S-41).